The primary structure comprises 689 residues: MTHQYLIEIGLEDMPAHVVTPSLQQFHDKTVAFLKENHLDHGAIDQYATPRRLALLIHDLADKQEDVEEDVKGPAKKIAQDADGNWTKAAIGFSRGQGMTPDDIVFKTIKGVDYVYLHKAIKGKTAAAILPGMLDVIKSLTFPTRMKWGAYDFEYIRPIHWLVSLLDDAIVPMKLLDVDAGRTTQGHRFLGRPVTLGNAADYVAALKAQFVIVEPAARKQLISDQIHQIAADHQWQIDLDADLLEEVNNLVEWPTAFAGNFDEKYLKIPEAVLITSMKDNQRYFYARDASGKMVNAFIGVRNGNADHLANVIAGNEKVLTARLEDAAFFYAEDQKRSIADDVDRLKAVSFHDKISSMYDKMARTRVIADLLADRFGLSATDKADLDRAASIYKFDLVTSMVGEFPELQGIMGEHYAQLAGEKPAVAQAIAEHYEPISADGALPESLVGTVLAIADKFDSLMSFFAVDLIPSGSNDPYALRRQAYGIVRMIAKHDWPFAVAELQTTIADALKAAGKTNNLDFAAHQQDLNAFMIDRAKQVLQGQKIRHDIVDAVTVRADADLAGILDAAKILSAHADDTDFKPVMEALGRVLRITKKQQVKVDVDTAKFENPSEGQLYDATVATAKKFDDEPTEADYQALKALADPINAYFDATMVMADDQAIRQNRLAALLQLAALIKQFGDVSQVIVK.

It belongs to the class-II aminoacyl-tRNA synthetase family. In terms of assembly, tetramer of two alpha and two beta subunits.

It is found in the cytoplasm. The catalysed reaction is tRNA(Gly) + glycine + ATP = glycyl-tRNA(Gly) + AMP + diphosphate. The sequence is that of Glycine--tRNA ligase beta subunit from Lacticaseibacillus paracasei (strain ATCC 334 / BCRC 17002 / CCUG 31169 / CIP 107868 / KCTC 3260 / NRRL B-441) (Lactobacillus paracasei).